Here is a 397-residue protein sequence, read N- to C-terminus: Glutamate 5-kinase (397 aa).

The interval 1–28 (MVADLTSDISESQEQETETNSANNNGAV) is disordered. K40 contacts ATP. Positions 80, 168, and 180 each coordinate substrate. Residues 200-201 (SD) and 243-249 (SGGMASK) contribute to the ATP site. The PUA domain maps to 306-383 (HGQVYIDQGA…QEIADILGYE (78 aa)).

The protein belongs to the glutamate 5-kinase family.

The protein resides in the cytoplasm. It carries out the reaction L-glutamate + ATP = L-glutamyl 5-phosphate + ADP. It participates in amino-acid biosynthesis; L-proline biosynthesis; L-glutamate 5-semialdehyde from L-glutamate: step 1/2. In terms of biological role, catalyzes the transfer of a phosphate group to glutamate to form L-glutamate 5-phosphate. This is Glutamate 5-kinase from Zymomonas mobilis subsp. mobilis (strain ATCC 31821 / ZM4 / CP4).